The chain runs to 627 residues: Protein zyg-11 homolog A (627 aa).

3 LRR repeats span residues 123–146, 203–227, and 409–432; these read LPNL…LSCK, LPNL…SFLQ, and ITSI…LIMA.

This sequence belongs to the zyg-11 family.

In terms of biological role, probably acts as a target recruitment subunit in an E3 ubiquitin ligase complex ZYGA-CUL2-elongin BC. The polypeptide is Protein zyg-11 homolog A (Zyg11a) (Mus musculus (Mouse)).